The chain runs to 364 residues: Fructose-bisphosphate aldolase A (364 aa).

Phosphotyrosine is present on Y5. Residue T9 is modified to Phosphothreonine. Phosphoserine is present on residues S36 and S39. K42 bears the N6-acetyllysine; alternate mark. K42 participates in a covalent cross-link: Glycyl lysine isopeptide (Lys-Gly) (interchain with G-Cter in SUMO1); alternate. K42 is covalently cross-linked (Glycyl lysine isopeptide (Lys-Gly) (interchain with G-Cter in SUMO2); alternate). Beta-D-fructose 1,6-bisphosphate is bound at residue R43. Phosphoserine is present on S46. An N6-(2-hydroxyisobutyryl)lysine modification is found at K99. K108 carries the post-translational modification N6-acetyllysine. K111 carries the N6-acetyllysine; alternate modification. N6-malonyllysine; alternate is present on K111. S132 is subject to Phosphoserine. The residue at position 147 (K147) is an N6-(2-hydroxyisobutyryl)lysine. The active-site Proton acceptor is E188. K230 acts as the Schiff-base intermediate with dihydroxyacetone-P in catalysis. S272 bears the Phosphoserine mark. Residues 272–274 (SGG), S301, and R304 each bind beta-D-fructose 1,6-bisphosphate. K312 is modified (N6-malonyllysine). At K330 the chain carries N6-acetyllysine.

This sequence belongs to the class I fructose-bisphosphate aldolase family. In terms of assembly, homotetramer. Interacts with SNX9 and WAS. Interacts with FBP2; the interaction blocks FBP2 inhibition by physiological concentrations of AMP and reduces inhibition by Ca(2+).

The protein resides in the cytoplasm. Its subcellular location is the myofibril. The protein localises to the sarcomere. It is found in the i band. It localises to the m line. It catalyses the reaction beta-D-fructose 1,6-bisphosphate = D-glyceraldehyde 3-phosphate + dihydroxyacetone phosphate. Its pathway is carbohydrate degradation; glycolysis; D-glyceraldehyde 3-phosphate and glycerone phosphate from D-glucose: step 4/4. Functionally, catalyzes the reversible conversion of beta-D-fructose 1,6-bisphosphate (FBP) into two triose phosphate and plays a key role in glycolysis and gluconeogenesis. In addition, may also function as scaffolding protein. The sequence is that of Fructose-bisphosphate aldolase A (ALDOA) from Pan troglodytes (Chimpanzee).